The primary structure comprises 345 residues: Anthranilate phosphoribosyltransferase (345 aa).

5-phospho-alpha-D-ribose 1-diphosphate is bound by residues G88, G91–D92, T96, N98–T101, K116–G124, and S128. G88 is a binding site for anthranilate. Mg(2+) is bound at residue S100. Anthranilate is bound at residue N119. R174 contacts anthranilate. Positions 233 and 234 each coordinate Mg(2+).

Belongs to the anthranilate phosphoribosyltransferase family. Homodimer. The cofactor is Mg(2+).

The enzyme catalyses N-(5-phospho-beta-D-ribosyl)anthranilate + diphosphate = 5-phospho-alpha-D-ribose 1-diphosphate + anthranilate. It functions in the pathway amino-acid biosynthesis; L-tryptophan biosynthesis; L-tryptophan from chorismate: step 2/5. Catalyzes the transfer of the phosphoribosyl group of 5-phosphorylribose-1-pyrophosphate (PRPP) to anthranilate to yield N-(5'-phosphoribosyl)-anthranilate (PRA). This is Anthranilate phosphoribosyltransferase from Prochlorococcus marinus (strain NATL2A).